The chain runs to 352 residues: Photosystem II D2 protein (352 aa).

The chain crosses the membrane as a helical span at residues 40–60 (CAYLALGGWLTGTTFVTSWYT). H117 contacts chlorophyll a. The chain crosses the membrane as a helical span at residues 124-140 (GFMLRQFEIAQSVRLRP). Positions 129 and 142 each coordinate pheophytin a. Residues 152 to 165 (VFVSVFLIYPLGQS) form a helical membrane-spanning segment. A chlorophyll a-binding site is contributed by H197. A helical transmembrane segment spans residues 207-227 (AALLCAIHGATVENTLFEDGD). 2 residues coordinate a plastoquinone: H214 and F261. Fe cation is bound at residue H214. H268 serves as a coordination point for Fe cation. Residues 278-294 (GLWMSALGVVGLALNLR) form a helical membrane-spanning segment.

The protein belongs to the reaction center PufL/M/PsbA/D family. As to quaternary structure, PSII is composed of 1 copy each of membrane proteins PsbA, PsbB, PsbC, PsbD, PsbE, PsbF, PsbH, PsbI, PsbJ, PsbK, PsbL, PsbM, PsbT, PsbY, PsbZ, Psb30/Ycf12, at least 3 peripheral proteins of the oxygen-evolving complex and a large number of cofactors. It forms dimeric complexes. The D1/D2 heterodimer binds P680, chlorophylls that are the primary electron donor of PSII, and subsequent electron acceptors. It shares a non-heme iron and each subunit binds pheophytin, quinone, additional chlorophylls, carotenoids and lipids. There is also a Cl(-1) ion associated with D1 and D2, which is required for oxygen evolution. The PSII complex binds additional chlorophylls, carotenoids and specific lipids. is required as a cofactor.

The protein localises to the plastid. It is found in the chloroplast thylakoid membrane. It catalyses the reaction 2 a plastoquinone + 4 hnu + 2 H2O = 2 a plastoquinol + O2. In terms of biological role, photosystem II (PSII) is a light-driven water:plastoquinone oxidoreductase that uses light energy to abstract electrons from H(2)O, generating O(2) and a proton gradient subsequently used for ATP formation. It consists of a core antenna complex that captures photons, and an electron transfer chain that converts photonic excitation into a charge separation. The D1/D2 (PsbA/PsbD) reaction center heterodimer binds P680, the primary electron donor of PSII as well as several subsequent electron acceptors. D2 is needed for assembly of a stable PSII complex. This Bigelowiella natans (Pedinomonas minutissima) protein is Photosystem II D2 protein.